Consider the following 399-residue polypeptide: Phosphoglycerate kinase (399 aa).

Substrate is bound by residues 22–24 (DFN), R37, 60–63 (HFGR), R118, and R151. ATP contacts are provided by residues K201, E322, and 352–355 (GGDS).

It belongs to the phosphoglycerate kinase family. Monomer.

The protein resides in the cytoplasm. It catalyses the reaction (2R)-3-phosphoglycerate + ATP = (2R)-3-phospho-glyceroyl phosphate + ADP. The protein operates within carbohydrate degradation; glycolysis; pyruvate from D-glyceraldehyde 3-phosphate: step 2/5. The polypeptide is Phosphoglycerate kinase (Wolbachia sp. subsp. Brugia malayi (strain TRS)).